The sequence spans 455 residues: 2-oxoisovalerate dehydrogenase subunit alpha, mitochondrial (455 aa).

A mitochondrion-targeting transit peptide spans 1–55; the sequence is MQGSAKMAMAVAVAVARVWRPSRGLGRTGLPLLRLLGARGLARFHPHRWQQQQHF. Residues tyrosine 168 and arginine 169 each contribute to the thiamine diphosphate site. Position 216 (serine 216) interacts with K(+). Serine 217 is a thiamine diphosphate binding site. Positions 218, 221, and 222 each coordinate K(+). Glutamate 248 is a Mg(2+) binding site. Glycine 249, alanine 250, and arginine 275 together coordinate thiamine diphosphate. Mg(2+)-binding residues include asparagine 277 and tyrosine 279. Histidine 346 contributes to the thiamine diphosphate binding site. At serine 347 the chain carries Phosphoserine; by BCKDK. At threonine 348 the chain carries Phosphothreonine. 2 positions are modified to phosphoserine: serine 349 and serine 357. N6-acetyllysine; alternate is present on lysine 366. N6-succinyllysine; alternate is present on lysine 366. Lysine 390 is modified (N6-succinyllysine).

This sequence belongs to the BCKDHA family. In terms of assembly, heterotetramer of 2 alpha/BCKDHA and 2 beta chains/BCKDHB that forms the branched-chain alpha-keto acid decarboxylase (E1) component of the BCKD complex. The branched-chain alpha-ketoacid dehydrogenase is a large complex composed of three major building blocks E1, E2 and E3. It is organized around E2, a 24-meric cubic core composed of DBT, to which are associated 6 to 12 copies of E1, and approximately 6 copies of the dehydrogenase E3, a DLD dimer. Interacts with PPM1K. Requires thiamine diphosphate as cofactor. The cofactor is Mg(2+). In terms of processing, phosphorylated at Ser-347 by BCKDK and dephosphorylated by protein phosphatase PPM1K. Expressed in kidney (at protein level).

It localises to the mitochondrion matrix. It catalyses the reaction N(6)-[(R)-lipoyl]-L-lysyl-[protein] + 3-methyl-2-oxobutanoate + H(+) = N(6)-[(R)-S(8)-2-methylpropanoyldihydrolipoyl]-L-lysyl-[protein] + CO2. Its function is as follows. Together with BCKDHB forms the heterotetrameric E1 subunit of the mitochondrial branched-chain alpha-ketoacid dehydrogenase (BCKD) complex. The BCKD complex catalyzes the multi-step oxidative decarboxylation of alpha-ketoacids derived from the branched-chain amino-acids valine, leucine and isoleucine producing CO2 and acyl-CoA which is subsequently utilized to produce energy. The E1 subunit catalyzes the first step with the decarboxylation of the alpha-ketoacid forming an enzyme-product intermediate. A reductive acylation mediated by the lipoylamide cofactor of E2 extracts the acyl group from the E1 active site for the next step of the reaction. The protein is 2-oxoisovalerate dehydrogenase subunit alpha, mitochondrial (BCKDHA) of Bos taurus (Bovine).